The chain runs to 635 residues: Threonine--tRNA ligase (635 aa).

The TGS domain occupies 1 to 61; sequence MPIITLPDGN…EKDANIAIIT (61 aa). A catalytic region spans residues 242–533; it reads DHRKIGKQLD…LTEEYAGVYP (292 aa). Zn(2+) is bound by residues Cys333, His384, and His510.

It belongs to the class-II aminoacyl-tRNA synthetase family. In terms of assembly, homodimer. Requires Zn(2+) as cofactor.

The protein localises to the cytoplasm. The catalysed reaction is tRNA(Thr) + L-threonine + ATP = L-threonyl-tRNA(Thr) + AMP + diphosphate + H(+). Its function is as follows. Catalyzes the attachment of threonine to tRNA(Thr) in a two-step reaction: L-threonine is first activated by ATP to form Thr-AMP and then transferred to the acceptor end of tRNA(Thr). Also edits incorrectly charged L-seryl-tRNA(Thr). The protein is Threonine--tRNA ligase of Psychromonas ingrahamii (strain DSM 17664 / CCUG 51855 / 37).